A 331-amino-acid chain; its full sequence is Protoheme IX farnesyltransferase (331 aa).

Transmembrane regions (helical) follow at residues 63-83, 109-129, 132-152, 160-180, 188-208, 215-235, 241-261, and 294-314; these read LACTLGGGALAAAAAGALNCL, SVFIGAVACTLVSSALLVSGV, LAAGLTLLGLCSYVLLYTAFL, IVFGGVAGAIPPLVGASAAAG, WLFSLVMVWTPAHFWALAILL, VGIPMLPTVSGPFVTAKAISV, VFLSFLGCFVLPEGGLLYGIL, and ILYMFGVCFLLVISRLQVSIV.

Belongs to the UbiA prenyltransferase family. Protoheme IX farnesyltransferase subfamily.

The protein localises to the cell inner membrane. The catalysed reaction is heme b + (2E,6E)-farnesyl diphosphate + H2O = Fe(II)-heme o + diphosphate. It participates in porphyrin-containing compound metabolism; heme O biosynthesis; heme O from protoheme: step 1/1. In terms of biological role, converts heme B (protoheme IX) to heme O by substitution of the vinyl group on carbon 2 of heme B porphyrin ring with a hydroxyethyl farnesyl side group. The sequence is that of Protoheme IX farnesyltransferase from Prochlorococcus marinus (strain NATL1A).